The chain runs to 383 residues: Queuine tRNA-ribosyltransferase (383 aa).

Asp92 functions as the Proton acceptor in the catalytic mechanism. Substrate-binding positions include 92–96 (DSGGF), Asp146, Gln190, and Gly217. Residues 248 to 254 (GVGKPED) are RNA binding. Residue Asp267 is the Nucleophile of the active site. The segment at 272–276 (TRNAR) is RNA binding; important for wobble base 34 recognition. Zn(2+) contacts are provided by Cys310, Cys312, Cys315, and His341.

This sequence belongs to the queuine tRNA-ribosyltransferase family. In terms of assembly, homodimer. Within each dimer, one monomer is responsible for RNA recognition and catalysis, while the other monomer binds to the replacement base PreQ1. The cofactor is Zn(2+).

The enzyme catalyses 7-aminomethyl-7-carbaguanine + guanosine(34) in tRNA = 7-aminomethyl-7-carbaguanosine(34) in tRNA + guanine. Its pathway is tRNA modification; tRNA-queuosine biosynthesis. Its function is as follows. Catalyzes the base-exchange of a guanine (G) residue with the queuine precursor 7-aminomethyl-7-deazaguanine (PreQ1) at position 34 (anticodon wobble position) in tRNAs with GU(N) anticodons (tRNA-Asp, -Asn, -His and -Tyr). Catalysis occurs through a double-displacement mechanism. The nucleophile active site attacks the C1' of nucleotide 34 to detach the guanine base from the RNA, forming a covalent enzyme-RNA intermediate. The proton acceptor active site deprotonates the incoming PreQ1, allowing a nucleophilic attack on the C1' of the ribose to form the product. After dissociation, two additional enzymatic reactions on the tRNA convert PreQ1 to queuine (Q), resulting in the hypermodified nucleoside queuosine (7-(((4,5-cis-dihydroxy-2-cyclopenten-1-yl)amino)methyl)-7-deazaguanosine). This is Queuine tRNA-ribosyltransferase from Psychrobacter cryohalolentis (strain ATCC BAA-1226 / DSM 17306 / VKM B-2378 / K5).